The sequence spans 272 residues: 4-hydroxy-tetrahydrodipicolinate reductase (272 aa).

Residues 11–16 and glutamate 37 each bind NAD(+); that span reads GVSGRM. Residue arginine 38 participates in NADP(+) binding. NAD(+)-binding positions include 101 to 103 and 125 to 128; these read GTT and AGNM. The active-site Proton donor/acceptor is the histidine 158. (S)-2,3,4,5-tetrahydrodipicolinate is bound at residue histidine 159. The active-site Proton donor is the lysine 162. 168-169 contacts (S)-2,3,4,5-tetrahydrodipicolinate; that stretch reads GT.

This sequence belongs to the DapB family.

The protein localises to the cytoplasm. The enzyme catalyses (S)-2,3,4,5-tetrahydrodipicolinate + NAD(+) + H2O = (2S,4S)-4-hydroxy-2,3,4,5-tetrahydrodipicolinate + NADH + H(+). It carries out the reaction (S)-2,3,4,5-tetrahydrodipicolinate + NADP(+) + H2O = (2S,4S)-4-hydroxy-2,3,4,5-tetrahydrodipicolinate + NADPH + H(+). The protein operates within amino-acid biosynthesis; L-lysine biosynthesis via DAP pathway; (S)-tetrahydrodipicolinate from L-aspartate: step 4/4. Functionally, catalyzes the conversion of 4-hydroxy-tetrahydrodipicolinate (HTPA) to tetrahydrodipicolinate. The chain is 4-hydroxy-tetrahydrodipicolinate reductase from Roseobacter denitrificans (strain ATCC 33942 / OCh 114) (Erythrobacter sp. (strain OCh 114)).